Here is a 713-residue protein sequence, read N- to C-terminus: Macrophage-expressed gene 1 protein (713 aa).

Residues 1–19 (MNSFMALVLIWMIIACAEA) form the signal peptide. The MACPF domain occupies 30–345 (GFQICKNALK…TAVRHYYTFN (316 aa)). The cysteines at positions 34 and 70 are disulfide-linked. The next 2 beta stranded transmembrane spans lie at 113–120 (LSINTELA) and 127–132 (GKFSTE). N-linked (GlcNAc...) asparagine glycosylation is present at asparagine 185. Transmembrane regions (beta stranded) follow at residues 235-244 (TVTASAGIAF) and 248-256 (VNFKVETDY). Asparagine 269 is a glycosylation site (N-linked (GlcNAc...) asparagine). Residues cysteine 350 and cysteine 369 are joined by a disulfide bond. The N-linked (GlcNAc...) asparagine glycan is linked to asparagine 375. Intrachain disulfides connect cysteine 385–cysteine 394, cysteine 432–cysteine 446, cysteine 436–cysteine 442, cysteine 531–cysteine 569, and cysteine 554–cysteine 574. The tract at residues 410-653 (PPGYSPVHLL…GDSNGMSGGE (244 aa)) is P2. Residues 654–674 (AAGITLGVTIALGIVITLAIY) traverse the membrane as a helical segment.

It belongs to the MPEG1 family. Homooligomer; predominantly forms a homooligomeric arc-shaped pore complex instead of complete rings of 16 subunits. Post-translationally, proteolytically processed in two steps to generate the Macrophage-expressed gene 1 protein, processed form: cleaved by trypsin in proximity of the helical transmembrane domain releases the ectodomain into the lysosomal lumen to orient the pore-forming domain toward the endogenous membranes, and processed by the asparagine endopeptidase (LGMN). Proteolytic processing in antigen-containing vesicles is pH-dependent. In terms of processing, monoubiquitinated in response to bacterial infection; ubiquitination is required for vesicular localization and antibacterial activity and can be blocked by bacterial cell cycle inhibiting factor (cif). In terms of tissue distribution, expressed constitutively in a variety of cell types including macrophages, microglia, neutrophils, T cells, marginal zone B cells, keratinocytes, splenocytes and intestinal epithelial cells.

Its subcellular location is the cytoplasmic vesicle membrane. It localises to the cytoplasmic vesicle. It is found in the phagosome membrane. Its activity is regulated as follows. Forms arc- and ring-shaped pre-pores on top of the membrane at neutral to slightly acidic pH conditions and converts to pores upon acidification. Undergoes transition from the pre-pore to the pore in a processive clockwise hand-over-hand process. In the pore state, 2 alpha-helical regions refold into transmembrane hairpins (TMH1 and TMH2) in each protomer that form in the ensemble complex giant beta-barrel transmembrane pores. Functionally, pore-forming protein involved in both innate and adaptive immunity. Plays a central role in antigen cross-presentation in dendritic cells by forming a pore in antigen-containing compartments, thereby promoting delivery of antigens for cross-presentation. Also involved in innate immune response following bacterial infection; shows antibacterial activity against a wide spectrum of Gram-positive, Gram-negative and acid-fast bacteria. Reduces the viability of the intracytosolic pathogen L.monocytogenes by inhibiting acidification of the phagocytic vacuole of host cells which restricts bacterial translocation from the vacuole to the cytosol. Required for the antibacterial activity of reactive oxygen species and nitric oxide. Pore-forming protein that plays a central role in antigen cross-presentation in dendritic cells by mediating delivery of antigens for cross-presentation. Dendritic cells bridge innate and adaptive immunity by capturing exogenous antigens on MHC class-I molecules and presenting them to naive CD8(+) T-cells. Acts by forming a pore in antigen-containing compartments, promoting the release of antigens into the cytosol, enabling generation of MHCI:peptide complexes and T-cell priming. The chain is Macrophage-expressed gene 1 protein from Mus musculus (Mouse).